A 73-amino-acid polypeptide reads, in one-letter code: Toxin Td9 (73 aa).

Residues 1–7 (IGMVAEC) form the signal peptide. The region spanning 8–70 (KDGYLVGDDG…IWNSATNSCG (63 aa)) is the LCN-type CS-alpha/beta domain. 4 disulfide bridges follow: C18–C69, C22–C44, C30–C50, and C34–C52. At K71 the chain carries Lysine amide.

The protein belongs to the long (4 C-C) scorpion toxin superfamily. Sodium channel inhibitor family. Beta subfamily. As to expression, expressed by the venom gland.

It localises to the secreted. Beta toxins bind voltage-independently at site-4 of sodium channels (Nav) and shift the voltage of activation toward more negative potentials thereby affecting sodium channel activation and promoting spontaneous and repetitive firing. The sequence is that of Toxin Td9 from Tityus discrepans (Venezuelan scorpion).